Consider the following 579-residue polypeptide: Small conductance calcium-activated potassium channel protein 2 (579 aa).

Disordered regions lie at residues 1–54 and 90–115; these read MSSC…AAAA and TGGGGGGGGSGHGSSSGTKSSKKKNQ. Gly residues predominate over residues 90-103; that stretch reads TGGGGGGGGSGHGS. The chain crosses the membrane as a helical span at residues 138 to 158; it reads ALIFGMFGIVVMVIETELSWG. Tyr-160 is modified (phosphotyrosine). The helical transmembrane segment at 168-188 threads the bilayer; that stretch reads LALKCLISLSTIILLGLIIVY. A helical membrane pass occupies residues 214 to 234; the sequence is IFFICLEILVCAIHPIPGNYT. Residues 256–276 form a helical membrane-spanning segment; it reads IILSIPMFLRLYLIARVMLLH. Residues 305–325 form a helical membrane-spanning segment; sequence LMTICPGTVLLVFSISLWIIA. Residues 345–365 constitute an intramembrane region (pore-forming); that stretch reads FLGAMWLISITFLSIGYGDMV. The helical transmembrane segment at 374–394 threads the bilayer; sequence VCLLTGIMGAGCTALVVAVVA. Residues 412-488 form a calmodulin-binding region; the sequence is DTQLTKRVKN…LVDLAKTQNI (77 aa). The tract at residues 551 to 579 is disordered; it reads VTYNAERSRSSSRRRRSSSTAPPTSSESS. Over residues 568–579 the composition is skewed to low complexity; sequence SSTAPPTSSESS.

Belongs to the potassium channel KCNN family. KCa2.2/KCNN2 subfamily. Homodimer. Heteromultimer with KCNN1 and KCNN3. The complex is composed of 4 channel subunits each of which binds to a calmodulin subunit which regulates the channel activity through calcium-binding. Interacts (via N-terminal domain) with MPP2. Expressed in atrial myocytes (at protein level). Widely expressed.

Its subcellular location is the membrane. The protein resides in the cytoplasm. The protein localises to the myofibril. It is found in the sarcomere. It localises to the z line. It catalyses the reaction K(+)(in) = K(+)(out). With respect to regulation, inhibited by bee venom neurotoxin apamin. Inhibited by UCL 1684 and tetraethylammonium (TEA). Functionally, small conductance calcium-activated potassium channel that mediates the voltage-independent transmembrane transfer of potassium across the cell membrane through a constitutive interaction with calmodulin which binds the intracellular calcium allowing its opening. The current is characterized by a voltage-independent activation, an intracellular calcium concentration increase-dependent activation and a single-channel conductance of about 3 picosiemens. Also presents an inwardly rectifying current, thus reducing its already small outward conductance of potassium ions, which is particularly the case when the membrane potential displays positive values, above + 20 mV. The inward rectification could be due to a blockade of the outward current by intracellular divalent cations such as calcium and magnesium and could also be due to an intrinsic property of the channel pore, independent of intracellular divalent ions. There are three positively charged amino acids in the S6 transmembrane domain, close to the pore, that collectively control the conductance and rectification through an electrostatic mechanism. Additionally, electrostatic contributions from these residues also play an important role in determining the intrinsic open probability of the channel in the absence of calcium, affecting the apparent calcium affinity for activation. Forms an heteromeric complex with calmodulin, which is constitutively associated in a calcium-independent manner. Channel opening is triggered when calcium binds the calmodulin resulting in a rotary movement leading to the formation of the dimeric complex to open the gate. Plays a role in the repolarization phase of cardiac action potential. The chain is Small conductance calcium-activated potassium channel protein 2 from Homo sapiens (Human).